The chain runs to 379 residues: F-box protein At1g67340 (379 aa).

One can recognise an F-box domain in the interval 41–92; that stretch reads ADLLDSIPDDLVISILCKLGSTSRCPADFINVLLTCKRLKGLAMNPIVLSRL. Residues His304, Cys307, Cys320, Cys323, Cys329, Cys333, His342, and Cys346 each contribute to the Zn(2+) site. An MYND-type; atypical zinc finger spans residues 304–346; that stretch reads HAGCGRPETRKHEFRRCSVCGVVNYCSRACQALDWKLRHKMDC. The disordered stretch occupies residues 358-379; it reads GGEGNVQIDGNGNGDNVLLPMS.

As to quaternary structure, part of a SCF (ASK-cullin-F-box) protein ligase complex. Interacts with SKP1A/ASK1, SKP1B/ASK2, ASK4, ASK11 and ASK13.

Its subcellular location is the nucleus. It functions in the pathway protein modification; protein ubiquitination. Its function is as follows. Component of SCF(ASK-cullin-F-box) E3 ubiquitin ligase complexes, which may mediate the ubiquitination and subsequent proteasomal degradation of target proteins. The chain is F-box protein At1g67340 from Arabidopsis thaliana (Mouse-ear cress).